A 1017-amino-acid chain; its full sequence is MARLQFQLKVDGLEDESLVVRGFEGQESLSDSVWRCEPCYGFRYQVDLASALSNLTAEQFVDQTAHLTILRDGQVVQQINGIVRQLSKGDTGHRHTFYSLTLVPALERLSLRSNSRIFQQQSVPEIISILLQEMGIEDYAFALKRECAQREFCVQYRETDLQFLHRIAAEEGLVYSHLHEAQKHTLLFTDSSDSQPKLAKPVPYNALAGGEINLPYVVDLQFKTTAQVSHTELKDYSFKKPAYGFTQRTQGKDIAYQQPNYEHFDAPGRYKDDANGKAFSQIRLEYLRRDALLADAKSDEPLLLAGVRFDLQDHLDHAMNRDWLVVQANHQGTQPQALQEEGGSGATTYSNQLKLIPAHITWRARPCAKPQVDGPMIATVVGPQGEEIYCDNFGRVKVHFPWDRYSSSNEKSSCWVRVAQEWAGSQYGSMAIPRVGHEVIVSFLNGDPDQPIITGRTYHATNTAPYALPDHKTKTVLRTETHQGQGYNELSFEDQAGSEQILLHAQKDWDALIEHDHTEVIRHDQHLTVDNDRFTRIQRNQHLTVEGEVRSKIALDSSHEVGASLQHKVGQRIAVEAGKEISLKSGAKIVVEAGAELTLKAGGSFVKVDAGGVHLVGPAINLNAGGSAGSGSAYGGQLAAAPRMLAQAKPVAELVQPDIAASMQSGAARVIDVASLPTMMPSSANNTANDEPVAEEKTPERILKSDLLKPSDELEKLAKRQASAYRQGNHSDEVKLLQEALIKLGFDLGKAGADGDFGSKTKTAIEQFQKSYQPSHQTHPSYSIGAVDGIVGKGTLLALDEALMDGWVYENNIYQIWPLGKTSEKYESAGRGPGVISTGNGDYGGASYGCYQMSSNLGVVQKYIQSSKFKEFFSGLNPATKEFNVVWQDIASRYPQEFREEQHQFIKRTHYDIQIGHLRGKGLLFEHNRAAVHDLIWSTSVQFGGRTNLIFNALNGQNMESMTDKDIIILVQDYKLVNTERLFKSSPSWWSDLKKRAVSEKKALLELEIDGLEVDIK.

D842 is an active-site residue.

It belongs to the VgrG protein family. In terms of assembly, interacts with TsiV3. Interacts with TseL.

Its subcellular location is the secreted. Its function is as follows. Part of the type VI secretion system specialized secretion system, which delivers several virulence factors in both prokaryotic and eukaryotic cells during infection. Forms the spike at the tip of the elongating tube formed by haemolysin co-regulated protein Hcp. Allows the delivery of the TseL antibacterial toxin to target cells where it exerts its toxicity. Additionally, acts directly as an effector and targets the cell wall peptidoglycan layer of prey cells for degradation via its C-terminus. Toxicity is counteracted by a cognate immunity protein TsiV3. In Vibrio cholerae serotype O1 (strain ATCC 39315 / El Tor Inaba N16961), this protein is Type VI secretion system spike protein VgrG3.